The following is a 287-amino-acid chain: Nucleotide-binding protein VV0445 (287 aa).

Residue G8 to S15 coordinates ATP. D56–N59 provides a ligand contact to GTP.

The protein belongs to the RapZ-like family.

Displays ATPase and GTPase activities. The polypeptide is Nucleotide-binding protein VV0445 (Vibrio vulnificus (strain YJ016)).